The following is a 294-amino-acid chain: 4-hydroxy-tetrahydrodipicolinate synthase (294 aa).

T44 contributes to the pyruvate binding site. The active-site Proton donor/acceptor is the Y132. The active-site Schiff-base intermediate with substrate is K160. V202 lines the pyruvate pocket.

Belongs to the DapA family. As to quaternary structure, homotetramer; dimer of dimers.

It localises to the cytoplasm. The catalysed reaction is L-aspartate 4-semialdehyde + pyruvate = (2S,4S)-4-hydroxy-2,3,4,5-tetrahydrodipicolinate + H2O + H(+). It participates in amino-acid biosynthesis; L-lysine biosynthesis via DAP pathway; (S)-tetrahydrodipicolinate from L-aspartate: step 3/4. Its function is as follows. Catalyzes the condensation of (S)-aspartate-beta-semialdehyde [(S)-ASA] and pyruvate to 4-hydroxy-tetrahydrodipicolinate (HTPA). The protein is 4-hydroxy-tetrahydrodipicolinate synthase of Leptospira borgpetersenii serovar Hardjo-bovis (strain JB197).